A 618-amino-acid chain; its full sequence is 1-deoxy-D-xylulose-5-phosphate synthase (618 aa).

Residues H70 and 111–113 (GHS) each bind thiamine diphosphate. A Mg(2+)-binding site is contributed by D142. Residues 143-144 (GS), N171, Y278, and E360 contribute to the thiamine diphosphate site. N171 is a binding site for Mg(2+).

The protein belongs to the transketolase family. DXPS subfamily. Homodimer. Requires Mg(2+) as cofactor. The cofactor is thiamine diphosphate.

The enzyme catalyses D-glyceraldehyde 3-phosphate + pyruvate + H(+) = 1-deoxy-D-xylulose 5-phosphate + CO2. It participates in metabolic intermediate biosynthesis; 1-deoxy-D-xylulose 5-phosphate biosynthesis; 1-deoxy-D-xylulose 5-phosphate from D-glyceraldehyde 3-phosphate and pyruvate: step 1/1. In terms of biological role, catalyzes the acyloin condensation reaction between C atoms 2 and 3 of pyruvate and glyceraldehyde 3-phosphate to yield 1-deoxy-D-xylulose-5-phosphate (DXP). The polypeptide is 1-deoxy-D-xylulose-5-phosphate synthase (Helicobacter pylori (strain J99 / ATCC 700824) (Campylobacter pylori J99)).